The chain runs to 1562 residues: DNA-directed RNA polymerase subunit beta'' (1562 aa).

Residues 1–22 (MVKKKKFKTKNIQNPPFSSQNS) are disordered. A compositionally biased stretch (polar residues) spans 11–22 (NIQNPPFSSQNS). Zn(2+) contacts are provided by cysteine 275, cysteine 338, cysteine 345, and cysteine 348.

The protein belongs to the RNA polymerase beta' chain family. RpoC2 subfamily. In terms of assembly, in plastids the minimal PEP RNA polymerase catalytic core is composed of four subunits: alpha, beta, beta', and beta''. When a (nuclear-encoded) sigma factor is associated with the core the holoenzyme is formed, which can initiate transcription. Zn(2+) is required as a cofactor.

Its subcellular location is the plastid. It localises to the chloroplast. The enzyme catalyses RNA(n) + a ribonucleoside 5'-triphosphate = RNA(n+1) + diphosphate. Functionally, DNA-dependent RNA polymerase catalyzes the transcription of DNA into RNA using the four ribonucleoside triphosphates as substrates. The protein is DNA-directed RNA polymerase subunit beta'' of Chlorella vulgaris (Green alga).